The chain runs to 488 residues: 3-octaprenyl-4-hydroxybenzoate carboxy-lyase (488 aa).

Asn-172 provides a ligand contact to Mn(2+). Residues Ile-175–Arg-177, Arg-189–Leu-191, and Arg-194–Gly-195 each bind prenylated FMN. Position 238 (Glu-238) interacts with Mn(2+). Catalysis depends on Asp-287, which acts as the Proton donor.

It belongs to the UbiD family. Homohexamer. Requires prenylated FMN as cofactor. The cofactor is Mn(2+).

It is found in the cell membrane. It catalyses the reaction a 4-hydroxy-3-(all-trans-polyprenyl)benzoate + H(+) = a 2-(all-trans-polyprenyl)phenol + CO2. The protein operates within cofactor biosynthesis; ubiquinone biosynthesis. Its function is as follows. Catalyzes the decarboxylation of 3-octaprenyl-4-hydroxy benzoate to 2-octaprenylphenol, an intermediate step in ubiquinone biosynthesis. The chain is 3-octaprenyl-4-hydroxybenzoate carboxy-lyase from Legionella pneumophila subsp. pneumophila (strain Philadelphia 1 / ATCC 33152 / DSM 7513).